Here is a 315-residue protein sequence, read N- to C-terminus: Beta-carotene hydroxylase 1, chloroplastic (315 aa).

Residues 1 to 58 (MAAEISISASSRAICLQRNPFPAPKYFATAPPLLFFSPLTCNLDAILRSRRKPRLAAC) constitute a chloroplast transit peptide. Helical transmembrane passes span 112–132 (YLVAAVMSSLGITSMAVISVY) and 146–166 (FSEMFCTFALAFGAAIGMEYW). One can recognise a Fatty acid hydroxylase domain in the interval 159–286 (AAIGMEYWAR…KFDGVPYGLF (128 aa)). The Histidine box-1 motif lies at 171–176 (HRALWH). The Histidine box-2 motif lies at 183–187 (HESHH). 2 consecutive transmembrane segments (helical) span residues 196–216 (LNDIFAIINAVPAIALLSFGF) and 222–242 (IPGLCFGAGLGITVFGMAYMF). The Histidine box-3 signature appears at 244 to 249 (HDGLVH). The Histidine box-4 signature appears at 270–274 (HQLHH).

Belongs to the sterol desaturase family.

The protein localises to the plastid. It localises to the chloroplast membrane. The enzyme catalyses all-trans-beta-carotene + 4 reduced [2Fe-2S]-[ferredoxin] + 2 O2 + 4 H(+) = all-trans-zeaxanthin + 4 oxidized [2Fe-2S]-[ferredoxin] + 2 H2O. The catalysed reaction is all-trans-beta-carotene + 2 reduced [2Fe-2S]-[ferredoxin] + O2 + 2 H(+) = beta-cryptoxanthin + 2 oxidized [2Fe-2S]-[ferredoxin] + H2O. It carries out the reaction beta-cryptoxanthin + 2 reduced [2Fe-2S]-[ferredoxin] + O2 + 2 H(+) = all-trans-zeaxanthin + 2 oxidized [2Fe-2S]-[ferredoxin] + H2O. With respect to regulation, inhibited by o-phenanthroline and 8-hydroxyquinoline. Functionally, nonheme diiron monooxygenase involved in the biosynthesis of xanthophylls. Specific for beta-ring hydroxylations of beta-carotene. Produces beta-cryptoxanthin and zeaxanthin. Uses ferredoxin as an electron donor. The protein is Beta-carotene hydroxylase 1, chloroplastic of Capsicum annuum (Capsicum pepper).